Reading from the N-terminus, the 253-residue chain is 1-(5-phosphoribosyl)-5-[(5-phosphoribosylamino)methylideneamino] imidazole-4-carboxamide isomerase (253 aa).

Aspartate 11 acts as the Proton acceptor in catalysis. Aspartate 132 (proton donor) is an active-site residue.

The protein belongs to the HisA/HisF family.

It localises to the cytoplasm. The catalysed reaction is 1-(5-phospho-beta-D-ribosyl)-5-[(5-phospho-beta-D-ribosylamino)methylideneamino]imidazole-4-carboxamide = 5-[(5-phospho-1-deoxy-D-ribulos-1-ylimino)methylamino]-1-(5-phospho-beta-D-ribosyl)imidazole-4-carboxamide. Its pathway is amino-acid biosynthesis; L-histidine biosynthesis; L-histidine from 5-phospho-alpha-D-ribose 1-diphosphate: step 4/9. This Methylobacterium nodulans (strain LMG 21967 / CNCM I-2342 / ORS 2060) protein is 1-(5-phosphoribosyl)-5-[(5-phosphoribosylamino)methylideneamino] imidazole-4-carboxamide isomerase.